A 154-amino-acid polypeptide reads, in one-letter code: Aspartate carbamoyltransferase regulatory chain (154 aa).

Residues Cys109, Cys114, Cys138, and Cys141 each coordinate Zn(2+).

The protein belongs to the PyrI family. In terms of assembly, contains catalytic and regulatory chains. Zn(2+) serves as cofactor.

In terms of biological role, involved in allosteric regulation of aspartate carbamoyltransferase. The polypeptide is Aspartate carbamoyltransferase regulatory chain (Yersinia pseudotuberculosis serotype O:1b (strain IP 31758)).